Reading from the N-terminus, the 200-residue chain is dITP/XTP pyrophosphatase (200 aa).

8-13 (TRNAGK) provides a ligand contact to substrate. The active-site Proton acceptor is the Asp72. Position 72 (Asp72) interacts with Mg(2+). Substrate contacts are provided by residues Ser73, 155–158 (FGYD), Lys178, and 183–184 (HR).

Belongs to the HAM1 NTPase family. Homodimer. The cofactor is Mg(2+).

It carries out the reaction XTP + H2O = XMP + diphosphate + H(+). It catalyses the reaction dITP + H2O = dIMP + diphosphate + H(+). The catalysed reaction is ITP + H2O = IMP + diphosphate + H(+). In terms of biological role, pyrophosphatase that catalyzes the hydrolysis of nucleoside triphosphates to their monophosphate derivatives, with a high preference for the non-canonical purine nucleotides XTP (xanthosine triphosphate), dITP (deoxyinosine triphosphate) and ITP. Seems to function as a house-cleaning enzyme that removes non-canonical purine nucleotides from the nucleotide pool, thus preventing their incorporation into DNA/RNA and avoiding chromosomal lesions. The polypeptide is dITP/XTP pyrophosphatase (Streptomyces coelicolor (strain ATCC BAA-471 / A3(2) / M145)).